Here is a 236-residue protein sequence, read N- to C-terminus: Eukaryotic translation initiation factor 3 subunit J (236 aa).

Disordered regions lie at residues 1 to 88 and 188 to 236; these read MADD…LANM and SEKQ…DDFM. Positions 28–46 are enriched in acidic residues; that stretch reads GEDDDEDVKESWEDEEEKK. Basic and acidic residues-rich tracts occupy residues 47-58, 68-88, and 188-197; these read DEEKPTKTEAPV, AKLE…LANM, and SEKQKMEKAN. Coiled-coil stretches lie at residues 61–112 and 174–209; these read KPNK…LKSA and ADIK…KGKV. Positions 201-210 are enriched in basic residues; it reads SAAKAKGKVS.

Belongs to the eIF-3 subunit J family. As to quaternary structure, component of the eukaryotic translation initiation factor 3 (eIF-3) complex. The eIF-3 complex interacts with pix.

Its subcellular location is the cytoplasm. In terms of biological role, component of the eukaryotic translation initiation factor 3 (eIF-3) complex, which is involved in protein synthesis of a specialized repertoire of mRNAs and, together with other initiation factors, stimulates binding of mRNA and methionyl-tRNAi to the 40S ribosome. The eIF-3 complex specifically targets and initiates translation of a subset of mRNAs involved in cell proliferation. This is Eukaryotic translation initiation factor 3 subunit J from Drosophila virilis (Fruit fly).